The chain runs to 467 residues: Bifunctional enzyme LpxC/FabZ (467 aa).

The segment at 1–306 (MLIHQRTLQN…FVKQLKKYAD (306 aa)) is UDP-3-O-acyl-N-acetylglucosamine deacetylase. H79, H264, and D268 together coordinate Zn(2+). H291 serves as the catalytic Proton donor. The segment at 307-467 (RNKLARQYQH…LMATVMEKKN (161 aa)) is 3-hydroxyacyl-[acyl-carrier-protein] dehydratase. H370 is a catalytic residue.

This sequence in the N-terminal section; belongs to the LpxC family. The protein in the C-terminal section; belongs to the thioester dehydratase family. The cofactor is Zn(2+).

It is found in the cytoplasm. The catalysed reaction is a UDP-3-O-[(3R)-3-hydroxyacyl]-N-acetyl-alpha-D-glucosamine + H2O = a UDP-3-O-[(3R)-3-hydroxyacyl]-alpha-D-glucosamine + acetate. The enzyme catalyses a (3R)-hydroxyacyl-[ACP] = a (2E)-enoyl-[ACP] + H2O. Its pathway is glycolipid biosynthesis; lipid IV(A) biosynthesis; lipid IV(A) from (3R)-3-hydroxytetradecanoyl-[acyl-carrier-protein] and UDP-N-acetyl-alpha-D-glucosamine: step 2/6. Catalyzes the hydrolysis of UDP-3-O-myristoyl-N-acetylglucosamine to form UDP-3-O-myristoylglucosamine and acetate, the committed step in lipid A biosynthesis. In terms of biological role, involved in unsaturated fatty acids biosynthesis. Catalyzes the dehydration of short chain beta-hydroxyacyl-ACPs and long chain saturated and unsaturated beta-hydroxyacyl-ACPs. This is Bifunctional enzyme LpxC/FabZ (lpxC/fabZ) from Chlorobaculum tepidum (strain ATCC 49652 / DSM 12025 / NBRC 103806 / TLS) (Chlorobium tepidum).